The chain runs to 230 residues: Probable cobalt-precorrin-2 C(20)-methyltransferase (230 aa).

The protein belongs to the precorrin methyltransferase family.

The enzyme catalyses Co-precorrin-2 + S-adenosyl-L-methionine = Co-precorrin-3 + S-adenosyl-L-homocysteine + H(+). The protein operates within cofactor biosynthesis; adenosylcobalamin biosynthesis; cob(II)yrinate a,c-diamide from sirohydrochlorin (anaerobic route): step 2/10. Methylates cobalt-precorrin-2 at the C-20 position to produce cobalt-precorrin-3A in the anaerobic cobalamin biosynthesis pathway. This is Probable cobalt-precorrin-2 C(20)-methyltransferase (cbiL) from Methanocaldococcus jannaschii (strain ATCC 43067 / DSM 2661 / JAL-1 / JCM 10045 / NBRC 100440) (Methanococcus jannaschii).